The chain runs to 78 residues: Large ribosomal subunit protein bL28 (78 aa).

Residues 1-25 (MARVCQVTGKRPMSGHHVSHANNKT) are disordered. Over residues 13–25 (MSGHHVSHANNKT) the composition is skewed to basic residues.

Belongs to the bacterial ribosomal protein bL28 family.

In Nitrosomonas eutropha (strain DSM 101675 / C91 / Nm57), this protein is Large ribosomal subunit protein bL28.